We begin with the raw amino-acid sequence, 119 residues long: NAD(P)H-quinone oxidoreductase subunit M (119 aa).

This sequence belongs to the complex I NdhM subunit family. In terms of assembly, NDH-1 can be composed of about 15 different subunits; different subcomplexes with different compositions have been identified which probably have different functions.

It is found in the cell inner membrane. It carries out the reaction a plastoquinone + NADH + (n+1) H(+)(in) = a plastoquinol + NAD(+) + n H(+)(out). The enzyme catalyses a plastoquinone + NADPH + (n+1) H(+)(in) = a plastoquinol + NADP(+) + n H(+)(out). Functionally, NDH-1 shuttles electrons from an unknown electron donor, via FMN and iron-sulfur (Fe-S) centers, to quinones in the respiratory and/or the photosynthetic chain. The immediate electron acceptor for the enzyme in this species is believed to be plastoquinone. Couples the redox reaction to proton translocation, and thus conserves the redox energy in a proton gradient. Cyanobacterial NDH-1 also plays a role in inorganic carbon-concentration. The chain is NAD(P)H-quinone oxidoreductase subunit M from Gloeobacter violaceus (strain ATCC 29082 / PCC 7421).